Here is a 378-residue protein sequence, read N- to C-terminus: 4-hydroxy-3-methylbut-2-en-1-yl diphosphate synthase (flavodoxin) (378 aa).

The [4Fe-4S] cluster site is built by C268, C271, C303, and E310.

It belongs to the IspG family. [4Fe-4S] cluster is required as a cofactor.

The enzyme catalyses (2E)-4-hydroxy-3-methylbut-2-enyl diphosphate + oxidized [flavodoxin] + H2O + 2 H(+) = 2-C-methyl-D-erythritol 2,4-cyclic diphosphate + reduced [flavodoxin]. The protein operates within isoprenoid biosynthesis; isopentenyl diphosphate biosynthesis via DXP pathway; isopentenyl diphosphate from 1-deoxy-D-xylulose 5-phosphate: step 5/6. Converts 2C-methyl-D-erythritol 2,4-cyclodiphosphate (ME-2,4cPP) into 1-hydroxy-2-methyl-2-(E)-butenyl 4-diphosphate. The sequence is that of 4-hydroxy-3-methylbut-2-en-1-yl diphosphate synthase (flavodoxin) from Corynebacterium efficiens (strain DSM 44549 / YS-314 / AJ 12310 / JCM 11189 / NBRC 100395).